We begin with the raw amino-acid sequence, 154 residues long: 6,7-dimethyl-8-ribityllumazine synthase (154 aa).

Residues tryptophan 23, 57–59, and 81–83 each bind 5-amino-6-(D-ribitylamino)uracil; these read AFE and AVI. Residue 86–87 participates in (2S)-2-hydroxy-3-oxobutyl phosphate binding; sequence AT. Histidine 89 acts as the Proton donor in catalysis. Phenylalanine 114 serves as a coordination point for 5-amino-6-(D-ribitylamino)uracil. Arginine 128 contacts (2S)-2-hydroxy-3-oxobutyl phosphate.

The protein belongs to the DMRL synthase family.

The catalysed reaction is (2S)-2-hydroxy-3-oxobutyl phosphate + 5-amino-6-(D-ribitylamino)uracil = 6,7-dimethyl-8-(1-D-ribityl)lumazine + phosphate + 2 H2O + H(+). The protein operates within cofactor biosynthesis; riboflavin biosynthesis; riboflavin from 2-hydroxy-3-oxobutyl phosphate and 5-amino-6-(D-ribitylamino)uracil: step 1/2. In terms of biological role, catalyzes the formation of 6,7-dimethyl-8-ribityllumazine by condensation of 5-amino-6-(D-ribitylamino)uracil with 3,4-dihydroxy-2-butanone 4-phosphate. This is the penultimate step in the biosynthesis of riboflavin. This Sulfurimonas denitrificans (strain ATCC 33889 / DSM 1251) (Thiomicrospira denitrificans (strain ATCC 33889 / DSM 1251)) protein is 6,7-dimethyl-8-ribityllumazine synthase.